The primary structure comprises 351 residues: uncharacterized protein (351 aa).

5 residues coordinate Mn(2+): D215, D226, H290, E319, and E333.

The protein belongs to the peptidase M24B family. Requires Mn(2+) as cofactor.

This is an uncharacterized protein from Staphylococcus haemolyticus (strain JCSC1435).